Consider the following 277-residue polypeptide: Type IV methyl-directed restriction enzyme EcoKMcrA (277 aa).

The 51-residue stretch at 207–257 (CENCGKNAPFYLNDGNPYLEVHHVIPLSSGGADTTDNCVALCPNCHRELHY) folds into the HNH domain.

Restriction of 5-methyl and 5-hydroxymethylcytosines at the specific DNA sequence 5'-C(me)CGG-3'. This chain is Type IV methyl-directed restriction enzyme EcoKMcrA, found in Escherichia coli (strain K12).